Consider the following 297-residue polypeptide: Heme A synthase (297 aa).

The Cytoplasmic portion of the chain corresponds to M1–K6. The chain crosses the membrane as a helical span at residues I7 to T27. The Extracellular segment spans residues K28–R62. A disulfide bridge links C35 with C42. Residue E58 is part of the active site. H61 is a heme o binding site. The chain crosses the membrane as a helical span at residues I63 to L83. Over K84–S93 the chain is Cytoplasmic. Residues F94–G114 traverse the membrane as a helical segment. The Extracellular segment spans residues Q115–A118. The chain crosses the membrane as a helical span at residues I119–I139. H123 is a heme o binding site. The Cytoplasmic portion of the chain corresponds to L140–R156. Residues G157–A177 form a helical membrane-spanning segment. The Extracellular portion of the chain corresponds to Y178–Y210. C188 and C194 form a disulfide bridge. A helical membrane pass occupies residues F211 to L231. A heme b-binding site is contributed by H212. The Cytoplasmic segment spans residues S232–W242. A helical transmembrane segment spans residues T243–F263. At T264–G271 the chain is on the extracellular side. A helical transmembrane segment spans residues L272 to I292. H274 lines the heme b pocket. Over T293–H297 the chain is Cytoplasmic.

It belongs to the COX15/CtaA family. Type 1 subfamily. In terms of assembly, interacts with CtaB. Heme b is required as a cofactor.

It localises to the cell membrane. The catalysed reaction is Fe(II)-heme o + 2 A + H2O = Fe(II)-heme a + 2 AH2. It functions in the pathway porphyrin-containing compound metabolism; heme A biosynthesis; heme A from heme O: step 1/1. Functionally, catalyzes the conversion of heme O to heme A by two successive hydroxylations of the methyl group at C8. The first hydroxylation forms heme I, the second hydroxylation results in an unstable dihydroxymethyl group, which spontaneously dehydrates, resulting in the formyl group of heme A. The protein is Heme A synthase of Alkalihalophilus pseudofirmus (strain ATCC BAA-2126 / JCM 17055 / OF4) (Bacillus pseudofirmus).